The chain runs to 214 residues: Protein-L-isoaspartate O-methyltransferase (214 aa).

The active site involves S63.

This sequence belongs to the methyltransferase superfamily. L-isoaspartyl/D-aspartyl protein methyltransferase family.

The protein localises to the cytoplasm. The catalysed reaction is [protein]-L-isoaspartate + S-adenosyl-L-methionine = [protein]-L-isoaspartate alpha-methyl ester + S-adenosyl-L-homocysteine. Functionally, catalyzes the methyl esterification of L-isoaspartyl residues in peptides and proteins that result from spontaneous decomposition of normal L-aspartyl and L-asparaginyl residues. It plays a role in the repair and/or degradation of damaged proteins. The polypeptide is Protein-L-isoaspartate O-methyltransferase (Desulfotalea psychrophila (strain LSv54 / DSM 12343)).